Here is a 513-residue protein sequence, read N- to C-terminus: ATP synthase subunit alpha (513 aa).

169-176 is an ATP binding site; it reads GDRQIGKT.

The protein belongs to the ATPase alpha/beta chains family. As to quaternary structure, F-type ATPases have 2 components, CF(1) - the catalytic core - and CF(0) - the membrane proton channel. CF(1) has five subunits: alpha(3), beta(3), gamma(1), delta(1), epsilon(1). CF(0) has three main subunits: a(1), b(2) and c(9-12). The alpha and beta chains form an alternating ring which encloses part of the gamma chain. CF(1) is attached to CF(0) by a central stalk formed by the gamma and epsilon chains, while a peripheral stalk is formed by the delta and b chains.

It localises to the cell inner membrane. It catalyses the reaction ATP + H2O + 4 H(+)(in) = ADP + phosphate + 5 H(+)(out). In terms of biological role, produces ATP from ADP in the presence of a proton gradient across the membrane. The alpha chain is a regulatory subunit. This Francisella tularensis subsp. novicida (strain U112) protein is ATP synthase subunit alpha.